A 469-amino-acid chain; its full sequence is E3 ubiquitin-protein ligase pellino homolog 3 (469 aa).

The tract at residues 1–39 is disordered; that stretch reads MVLEGNPEVGSPRTSDLQHRGNKGSCVLSSPGEDAQPGE. S11 bears the Phosphoserine mark.

Belongs to the pellino family. In terms of assembly, interacts with TRAF6, MAP3K14 and MAP3K7. Post-translationally, phosphorylated by IRAK1 enhancing its E3 ligase activity. As to expression, highly expressed in brain, heart and testis, and at lower level in kidney, liver, lung, placenta, small intestine, spleen and stomach. Isoform 1 is not expressed in lung.

The catalysed reaction is S-ubiquitinyl-[E2 ubiquitin-conjugating enzyme]-L-cysteine + [acceptor protein]-L-lysine = [E2 ubiquitin-conjugating enzyme]-L-cysteine + N(6)-ubiquitinyl-[acceptor protein]-L-lysine.. Its pathway is protein modification; protein ubiquitination. Its function is as follows. E3 ubiquitin ligase catalyzing the covalent attachment of ubiquitin moieties onto substrate proteins. Involved in the TLR and IL-1 signaling pathways via interaction with the complex containing IRAK kinases and TRAF6. Mediates 'Lys-63'-linked polyubiquitination of IRAK1. Can activate AP1/JUN and ELK1. Acts as a regulator of innate immunity by mediating 'Lys-63'-linked polyubiquitination of RIPK2 downstream of NOD1 and NOD2, thereby transforming RIPK2 into a scaffolding protein for downstream effectors, ultimately leading to activation of the NF-kappa-B and MAP kinases signaling. Catalyzes 'Lys-63'-linked polyubiquitination of RIPK2 in parallel of XIAP. This is E3 ubiquitin-protein ligase pellino homolog 3 from Homo sapiens (Human).